The primary structure comprises 219 residues: Trafficking protein particle complex subunit 4 (219 aa).

The protein belongs to the TRAPP small subunits family. TRAPPC4 subfamily. Component of the multisubunit TRAPP (transport protein particle) complex, which includes at least TRAPPC2, TRAPPC2L, TRAPPC3, TRAPPC3L, TRAPPC4, TRAPPC5, TRAPPC8, TRAPPC9, TRAPPC10, TRAPPC11 and TRAPPC12. Interacts with SDC2. As to expression, widely expressed.

Its subcellular location is the postsynaptic cell membrane. The protein resides in the golgi apparatus membrane. It is found in the endoplasmic reticulum. The protein localises to the vesicle. In terms of biological role, core component of the TRAPP complexes which has a function of guanine nucleotide exchange factor activity for Rab1 GTPase. Plays a role in vesicular transport from endoplasmic reticulum to Golgi and autophagy. May play a role in dendrite postsynaptic membrane trafficking. This chain is Trafficking protein particle complex subunit 4, found in Mus musculus (Mouse).